The primary structure comprises 302 residues: Probable alpha-L-glutamate ligase (302 aa).

In terms of domain architecture, ATP-grasp spans 112–294; sequence LQLLLKTGVP…IAAEIIDYIE (183 aa). Residues K148, 185–186, D194, and 218–220 contribute to the ATP site; these read DF and RAN. Mg(2+)-binding residues include D255, E267, and N269. Positions 255, 267, and 269 each coordinate Mn(2+).

The protein belongs to the RimK family. The cofactor is Mg(2+). Mn(2+) is required as a cofactor.

The sequence is that of Probable alpha-L-glutamate ligase from Haemophilus influenzae (strain 86-028NP).